The following is a 417-amino-acid chain: Glutamyl-tRNA reductase (417 aa).

Residues 49-52, Ser109, 114-116, and Gln120 contribute to the substrate site; these read TCNR and ESQ. Cys50 acts as the Nucleophile in catalysis. Residue 189–194 participates in NADP(+) binding; sequence GLGEIG.

The protein belongs to the glutamyl-tRNA reductase family. As to quaternary structure, homodimer.

The enzyme catalyses (S)-4-amino-5-oxopentanoate + tRNA(Glu) + NADP(+) = L-glutamyl-tRNA(Glu) + NADPH + H(+). It participates in porphyrin-containing compound metabolism; protoporphyrin-IX biosynthesis; 5-aminolevulinate from L-glutamyl-tRNA(Glu): step 1/2. In terms of biological role, catalyzes the NADPH-dependent reduction of glutamyl-tRNA(Glu) to glutamate 1-semialdehyde (GSA). The chain is Glutamyl-tRNA reductase from Streptococcus sanguinis (strain SK36).